The primary structure comprises 89 residues: Small ribosomal subunit protein uS15 (89 aa).

The protein belongs to the universal ribosomal protein uS15 family. Part of the 30S ribosomal subunit. Forms a bridge to the 50S subunit in the 70S ribosome, contacting the 23S rRNA.

One of the primary rRNA binding proteins, it binds directly to 16S rRNA where it helps nucleate assembly of the platform of the 30S subunit by binding and bridging several RNA helices of the 16S rRNA. In terms of biological role, forms an intersubunit bridge (bridge B4) with the 23S rRNA of the 50S subunit in the ribosome. This is Small ribosomal subunit protein uS15 from Pseudomonas fluorescens (strain ATCC BAA-477 / NRRL B-23932 / Pf-5).